The chain runs to 156 residues: Transcription elongation factor GreA (156 aa).

A coiled-coil region spans residues 2-27 (EKTFPMTKEGLDKLKAELENLKLVKR).

This sequence belongs to the GreA/GreB family.

Necessary for efficient RNA polymerase transcription elongation past template-encoded arresting sites. The arresting sites in DNA have the property of trapping a certain fraction of elongating RNA polymerases that pass through, resulting in locked ternary complexes. Cleavage of the nascent transcript by cleavage factors such as GreA or GreB allows the resumption of elongation from the new 3'terminus. GreA releases sequences of 2 to 3 nucleotides. The sequence is that of Transcription elongation factor GreA from Lactococcus lactis subsp. cremoris (strain SK11).